The following is a 308-amino-acid chain: Regulating synaptic membrane exocytosis protein 3 (308 aa).

The segment at 86–120 (STETGIAVEMRSRVTRQGSRESTDGSTNSNSSDGT) is disordered. A compositionally biased stretch (low complexity) spans 109 to 120 (DGSTNSNSSDGT). The C2 domain maps to 156 to 274 (PMGDVHIAIM…DLSAAVTGWY (119 aa)). Phosphoserine is present on residues Ser295 and Ser298.

As to quaternary structure, binds PPFIA3. Does not bind RAB3.

The protein resides in the synapse. Functionally, regulates synaptic membrane exocytosis. The sequence is that of Regulating synaptic membrane exocytosis protein 3 (RIMS3) from Homo sapiens (Human).